Here is a 189-residue protein sequence, read N- to C-terminus: Interferon alpha-1 (189 aa).

A signal peptide spans 1–23 (MAPTSAFLTALVLLSCNAICSLG). Intrachain disulfides connect Cys24–Cys122 and Cys52–Cys162.

Belongs to the alpha/beta interferon family. In terms of assembly, interacts with CR2.

It is found in the secreted. Functionally, produced by macrophages, IFN-alpha have antiviral activities. Interferon stimulates the production of two enzymes: a protein kinase and an oligoadenylate synthetase. This is Interferon alpha-1 from Sus scrofa (Pig).